The following is a 417-amino-acid chain: Probable serine/threonine-protein kinase WNK9 (417 aa).

The tract at residues 1–23 is disordered; the sequence is MDLVEAEAEEQPPDEDGDEEGYV. The 258-residue stretch at 32–289 folds into the Protein kinase domain; that stretch reads IRYDEIVGSG…ATELLKSSFL (258 aa). Residues 113 to 116 and lysine 163 contribute to the ATP site; that span reads TELF. Aspartate 180 functions as the Proton acceptor in the catalytic mechanism.

This sequence belongs to the protein kinase superfamily. Ser/Thr protein kinase family. WNK subfamily.

The enzyme catalyses L-seryl-[protein] + ATP = O-phospho-L-seryl-[protein] + ADP + H(+). The catalysed reaction is L-threonyl-[protein] + ATP = O-phospho-L-threonyl-[protein] + ADP + H(+). In Oryza sativa subsp. japonica (Rice), this protein is Probable serine/threonine-protein kinase WNK9 (WNK9).